Consider the following 307-residue polypeptide: Sporulation sigma-E factor-processing peptidase (307 aa).

Transmembrane regions (helical) follow at residues 7 to 27 (LIWMLNFGLDTILLMLCAVVL), 36 to 56 (LLLGGFIGSLIVLLMFTPFSH), 57 to 77 (LMVHPAIKILFSFFMVLMTFG), 89 to 109 (LTFYFATFVVGGGLMGVHFLF), and 127 to 147 (FGDPISWIFVLIGFPLLSYFS). Aspartate 183 is a catalytic residue.

This sequence belongs to the peptidase U4 family. In terms of assembly, self-associates. Interacts with SigE. Interacts with SpoIIR.

Its subcellular location is the cell membrane. Probable aspartic protease that is responsible for the proteolytic cleavage of the RNA polymerase sigma E factor (SigE/spoIIGB) to yield the active peptide in the mother cell during sporulation. Responds to a signal from the forespore that is triggered by the extracellular signal protein SpoIIR. This chain is Sporulation sigma-E factor-processing peptidase, found in Priestia megaterium (strain ATCC 12872 / QMB1551) (Bacillus megaterium).